The sequence spans 457 residues: Adenylosuccinate synthetase isozyme 2 (457 aa).

GTP is bound by residues 40–46 and 68–70; these read GDEGKGK and GHT. The active-site Proton acceptor is D41. Positions 41 and 68 each coordinate Mg(2+). Position 41 (D41) interacts with substrate. IMP is bound by residues 41 to 44, 66 to 69, T163, R177, N256, T271, and R335; these read DEGK and NAGH. Residue H69 is the Proton donor of the active site. 331–337 serves as a coordination point for substrate; sequence VTTGRKR. Residues R337, 363 to 365, and 445 to 448 each bind GTP; these read KLD and GVGK.

It belongs to the adenylosuccinate synthetase family. In terms of assembly, homodimer. Mg(2+) serves as cofactor.

The protein resides in the cytoplasm. The protein localises to the mitochondrion. It carries out the reaction IMP + L-aspartate + GTP = N(6)-(1,2-dicarboxyethyl)-AMP + GDP + phosphate + 2 H(+). The protein operates within purine metabolism; AMP biosynthesis via de novo pathway; AMP from IMP: step 1/2. Its activity is regulated as follows. Inhibited competitively by AMP and IMP and non-competitively by fructose 1,6-bisphosphate. In terms of biological role, plays an important role in the de novo pathway and in the salvage pathway of purine nucleotide biosynthesis. Catalyzes the first committed step in the biosynthesis of AMP from IMP. In Xenopus laevis (African clawed frog), this protein is Adenylosuccinate synthetase isozyme 2 (adss2).